A 296-amino-acid chain; its full sequence is Outer surface protein B (296 aa).

The N-terminal stretch at 1–15 (MRLLIGFALALALIG) is a signal peptide. The N-palmitoyl cysteine moiety is linked to residue Cys-16. Cys-16 carries the S-diacylglycerol cysteine lipid modification. The disordered stretch occupies residues 25–51 (GSQKENDLNLEDSSKKSHQNAKQDLPA). Residues 28–39 (KENDLNLEDSSK) are compositionally biased toward basic and acidic residues.

Its subcellular location is the cell outer membrane. The sequence is that of Outer surface protein B (ospB) from Borreliella burgdorferi (strain ATCC 35210 / DSM 4680 / CIP 102532 / B31) (Borrelia burgdorferi).